A 69-amino-acid chain; its full sequence is ATP synthase protein 8 (69 aa).

The chain crosses the membrane as a helical span at residues 8–24 (TWTLTISLMIISLFCIY). Lys-55 carries the post-translational modification N6-acetyllysine; alternate. Lys-55 bears the N6-succinyllysine; alternate mark. Residue Lys-58 is modified to N6-acetyllysine.

Belongs to the ATPase protein 8 family. F-type ATPases have 2 components, CF(1) - the catalytic core - and CF(0) - the membrane proton channel. Component of an ATP synthase complex composed of ATP5PB, ATP5MC1, ATP5F1E, ATP5PD, ATP5ME, ATP5PF, ATP5MF, MT-ATP6, MT-ATP8, ATP5F1A, ATP5F1B, ATP5F1D, ATP5F1C, ATP5PO, ATP5MG, ATP5MK and ATP5MJ. Interacts with PRICKLE3.

The protein localises to the mitochondrion membrane. Mitochondrial membrane ATP synthase (F(1)F(0) ATP synthase or Complex V) produces ATP from ADP in the presence of a proton gradient across the membrane which is generated by electron transport complexes of the respiratory chain. F-type ATPases consist of two structural domains, F(1) - containing the extramembraneous catalytic core and F(0) - containing the membrane proton channel, linked together by a central stalk and a peripheral stalk. During catalysis, ATP synthesis in the catalytic domain of F(1) is coupled via a rotary mechanism of the central stalk subunits to proton translocation. Part of the complex F(0) domain. Minor subunit located with subunit a in the membrane. The chain is ATP synthase protein 8 (MT-ATP8) from Didelphis virginiana (North American opossum).